We begin with the raw amino-acid sequence, 457 residues long: MQKYIVEARSLLALAIPVVIAQLSQTAMGVVDTIMAGSVSATDMAAVAVGTSIWLPAILFGHGLLLALTPTVAQLNGSGRRNQIAHQVRQGFWLAFCVSVLIMVVIYNSDHIIMRMHNIDPVLADKAVGFLHAIMWGAPGYLFFQVLRNQCEGLSKTKPGMVIGFIGLLVNIPINYIFIYGKFGAPALGGVGCGVATGTVYWVMFLMMRWYVTRARSQQDIKLEKGFAAPDWQVMKRLGGLGLPVALALFFEVTLFAVVALLVSPLGIVAVAGHQIALNFSSLMFMLPMSLSVAATIRVGFRLGQGSVDDARVAAYTSIAVGLMLACVTAIFTVVFREHIALLYNKTPEVVVMASHLMLLAALYQLSDAIQVIGSGVLRGYKDTRSIFFITFTAYWLLGLPSGYLLGLTDYIVPAMGPSGFWIGFVIGLTSAAILMALRIRWLQKQPSAFILQKAAH.

The next 12 helical transmembrane spans lie at 11 to 31 (LLALAIPVVIAQLSQTAMGVV), 46 to 66 (AVAVGTSIWLPAILFGHGLLL), 93 to 113 (WLAFCVSVLIMVVIYNSDHII), 127 to 147 (AVGFLHAIMWGAPGYLFFQVL), 160 to 180 (GMVIGFIGLLVNIPINYIFIY), 188 to 208 (LGGVGCGVATGTVYWVMFLMM), 243 to 263 (LPVALALFFEVTLFAVVALLV), 278 to 300 (LNFSSLMFMLPMSLSVAATIRVG), 316 to 336 (YTSIAVGLMLACVTAIFTVVF), 350 to 370 (VVVMASHLMLLAALYQLSDAI), 387 to 407 (IFFITFTAYWLLGLPSGYLLG), and 418 to 438 (PSGFWIGFVIGLTSAAILMAL).

The protein belongs to the multi antimicrobial extrusion (MATE) (TC 2.A.66.1) family. MdtK subfamily.

The protein localises to the cell inner membrane. Multidrug efflux pump that functions probably as a Na(+)/drug antiporter. The protein is Multidrug resistance protein MdtK of Yersinia enterocolitica serotype O:8 / biotype 1B (strain NCTC 13174 / 8081).